A 415-amino-acid polypeptide reads, in one-letter code: MHSLIKDLKARNLINNITNEEKLIKALEKNKGIYVGFDPSADSLHLGNYIMIMLLKRFRLYNIKTLALVGGATGMIGDPSGKSAERNLLDKTILEKNIAKIKFQLEKFTNSQVINNYVFYENMTFLDFLRDVGKLININYLLEKEIINSRLSVGISYTEFSYNLLQGYDFLQLYKNDNIAIQAGGSDQWGNITTGIEMIRKNLGDDNIACGLTINLLTNSEGKKFGKSEKGAIYLDENKSTVYEMYQFLINQSDADVEKLLNFLTLIDVEEIKKIMQAHKNNPALRVAQKALAKAVVVDIHGQQKYEQALHISEVLFNGSISTLNQEELEIAIKSLPATKLDKDEIKIIDLLNLANISSSNRIARDFLNTGSILINDIKINDENFLVKKQDAINQKFSIIRKGKRNYFLILWNKD.

L-tyrosine is bound at residue tyrosine 34. The 'HIGH' region signature appears at 39-48 (PSADSLHLGN). Tyrosine 162 and glutamine 166 together coordinate L-tyrosine. The short motif at 224–228 (KFGKS) is the 'KMSKS' region element. Lysine 227 is an ATP binding site. The S4 RNA-binding domain occupies 346-413 (IKIIDLLNLA…KRNYFLILWN (68 aa)).

Belongs to the class-I aminoacyl-tRNA synthetase family. TyrS type 1 subfamily. Homodimer.

The protein resides in the cytoplasm. The catalysed reaction is tRNA(Tyr) + L-tyrosine + ATP = L-tyrosyl-tRNA(Tyr) + AMP + diphosphate + H(+). In terms of biological role, catalyzes the attachment of tyrosine to tRNA(Tyr) in a two-step reaction: tyrosine is first activated by ATP to form Tyr-AMP and then transferred to the acceptor end of tRNA(Tyr). The polypeptide is Tyrosine--tRNA ligase (Ureaplasma parvum serovar 3 (strain ATCC 27815 / 27 / NCTC 11736)).